A 591-amino-acid polypeptide reads, in one-letter code: V-type ATP synthase alpha chain (591 aa).

Residue 242–249 coordinates ATP; the sequence is GPFGAGKT.

This sequence belongs to the ATPase alpha/beta chains family.

It catalyses the reaction ATP + H2O + 4 H(+)(in) = ADP + phosphate + 5 H(+)(out). Its function is as follows. Produces ATP from ADP in the presence of a proton gradient across the membrane. The V-type alpha chain is a catalytic subunit. This Chlamydia caviae (strain ATCC VR-813 / DSM 19441 / 03DC25 / GPIC) (Chlamydophila caviae) protein is V-type ATP synthase alpha chain.